The chain runs to 89 residues: Putative regulatory protein BPUM_1466 (89 aa).

The protein belongs to the RemA family.

In Bacillus pumilus (strain SAFR-032), this protein is Putative regulatory protein BPUM_1466.